Reading from the N-terminus, the 36-residue chain is Thrombin (36 aa).

The Peptidase S1 domain occupies 19–36 (IVKGIDAEVASAPMQVML).

It belongs to the peptidase S1 family. In terms of assembly, forms a heterodimer with SERPINA5. The gamma-carboxyglutamyl residues, which bind calcium ions, result from the carboxylation of glutamyl residues by a microsomal enzyme, the vitamin K-dependent carboxylase. The modified residues are necessary for the calcium-dependent interaction with a negatively charged phospholipid surface, which is essential for the conversion of prothrombin to thrombin. Post-translationally, N-glycosylated. In terms of tissue distribution, expressed by the liver and secreted in plasma.

It is found in the secreted. The enzyme catalyses Selective cleavage of Arg-|-Gly bonds in fibrinogen to form fibrin and release fibrinopeptides A and B.. With respect to regulation, inhibited by SERPINA5. Its function is as follows. Thrombin, which cleaves bonds after Arg and Lys, converts fibrinogen to fibrin and activates factors V, VII, VIII, XIII, and, in complex with thrombomodulin, protein C. Functions in blood homeostasis, inflammation and wound healing. The chain is Thrombin from Salmo salar (Atlantic salmon).